Reading from the N-terminus, the 163-residue chain is Thiol peroxidase (163 aa).

The Thioredoxin domain occupies 16–162; that stretch reads LQVGDTAHDF…YDAAIAAVKS (147 aa). The active-site Cysteine sulfenic acid (-SOH) intermediate is the C58. Residues C58 and C92 are joined by a disulfide bond.

Belongs to the peroxiredoxin family. Tpx subfamily. Homodimer.

The enzyme catalyses a hydroperoxide + [thioredoxin]-dithiol = an alcohol + [thioredoxin]-disulfide + H2O. In terms of biological role, thiol-specific peroxidase that catalyzes the reduction of hydrogen peroxide and organic hydroperoxides to water and alcohols, respectively. Plays a role in cell protection against oxidative stress by detoxifying peroxides. This chain is Thiol peroxidase, found in Streptococcus sanguinis.